Consider the following 866-residue polypeptide: MPENEKEPAQPTTNEDALDTGKTCLQIKELKDKERALMLAENARMQGLSEFFFSRHEDKRLYESKSTNTEDVNKAIYFSYPSRRHSCTLVNIPKPCVNKMISHIEDVESKIQEHLTQFEASFEEWTSVTKDKEAGLDVSAPEKQVHPEKGKDEKCPELKKRMETLLSEAIHLIKSLETDRAEAEQALKQHKSRKKKISMKIDSWSIWKLQELPLAVQKEHENFSKINAELRSYLEDIALKVEQLQERKEKLEKANAKLQVDIDYMASHSVLLEKKRKQELGCLKERYHKKFEVMEKFRAIHEELKESVDKCEGAKARLKNMKVENEREIQEELINATSYEKELDKLSVLDAHYTTSIETVNLDIEGDEEAMNEVLRETQSTTNELENLKKTVDDLKRLFDQYCWRQRKYENEYLEAFSNFYSLKKTWDIELSNVSKDAKDLTIVYEAQSEENKRIQSEIQSITDDIEESIKKTAEMEEEVHTFVEMKMKNNNYLKQLYKQAYQVGAVYHLSRHKTEELEDKLADLKRIFKGREELLKKLTRGDIATGIEIQKRLYAIEETQFIEMQEFIRRQVLYNMALLEVEEQLKELEAEAVRIRYLHRQHSKMLHNIRKRKERVKKNVDATKKKLLKKSKKSRMELTRTEGKRSIIHEEIEIARGQTVALHEKCIELSKEIRIMNLERTNYEERLKKLQEEFFKLQFDREHVHGVYDHLMREKQYCEERIFEEERRFRRLIDMRKNTLKNIRKCQDDLLEENLRLAKEYQSAQLIFLKEKESYFNGYDRLLSLNFSLSDKKKLCQLQKRLDQKWQEYFRLMILFNKTKLAKFQGDSQNSIQKILAVQEESSSLMQHILDFFKSFPNSSCGEDD.

Positions 1 to 21 (MPENEKEPAQPTTNEDALDTG) are disordered. Coiled coils occupy residues 157-266 (ELKK…DYMA), 292-403 (EVME…DQYC), 439-480 (KDLT…EEEV), 514-539 (KTEE…LKKL), 570-631 (RRQV…LLKK), and 665-705 (EKCI…REHV).

The protein is Coiled-coil domain-containing protein 178 (Ccdc178) of Mus musculus (Mouse).